The sequence spans 332 residues: Glycerol-3-phosphate dehydrogenase [NAD(P)+] (332 aa).

Positions 11, 12, 32, 33, and 106 each coordinate NADPH. Positions 106 and 136 each coordinate sn-glycerol 3-phosphate. A140 is an NADPH binding site. K191, D244, S254, R255, and N256 together coordinate sn-glycerol 3-phosphate. Catalysis depends on K191, which acts as the Proton acceptor. R255 is an NADPH binding site. V280 and E282 together coordinate NADPH.

The protein belongs to the NAD-dependent glycerol-3-phosphate dehydrogenase family.

It localises to the cytoplasm. The catalysed reaction is sn-glycerol 3-phosphate + NAD(+) = dihydroxyacetone phosphate + NADH + H(+). It catalyses the reaction sn-glycerol 3-phosphate + NADP(+) = dihydroxyacetone phosphate + NADPH + H(+). Its pathway is membrane lipid metabolism; glycerophospholipid metabolism. In terms of biological role, catalyzes the reduction of the glycolytic intermediate dihydroxyacetone phosphate (DHAP) to sn-glycerol 3-phosphate (G3P), the key precursor for phospholipid synthesis. The sequence is that of Glycerol-3-phosphate dehydrogenase [NAD(P)+] from Corynebacterium jeikeium (strain K411).